A 106-amino-acid chain; its full sequence is ATP-dependent Clp protease adapter protein ClpS (106 aa).

Belongs to the ClpS family. Binds to the N-terminal domain of the chaperone ClpA.

In terms of biological role, involved in the modulation of the specificity of the ClpAP-mediated ATP-dependent protein degradation. The chain is ATP-dependent Clp protease adapter protein ClpS from Enterobacter sp. (strain 638).